Consider the following 190-residue polypeptide: Nucleoside triphosphate pyrophosphatase (190 aa).

The Proton acceptor role is filled by Asp-69.

It belongs to the Maf family. Requires a divalent metal cation as cofactor.

It localises to the cytoplasm. The enzyme catalyses a ribonucleoside 5'-triphosphate + H2O = a ribonucleoside 5'-phosphate + diphosphate + H(+). The catalysed reaction is a 2'-deoxyribonucleoside 5'-triphosphate + H2O = a 2'-deoxyribonucleoside 5'-phosphate + diphosphate + H(+). Nucleoside triphosphate pyrophosphatase. May have a dual role in cell division arrest and in preventing the incorporation of modified nucleotides into cellular nucleic acids. The sequence is that of Nucleoside triphosphate pyrophosphatase from Helicobacter pylori (strain G27).